We begin with the raw amino-acid sequence, 403 residues long: Keratin, type I cytoskeletal 19 (403 aa).

Residues 1 to 82 (MTSYSYRQTS…AVSDGLLSGN (82 aa)) form a head region. At Arg7 the chain carries Omega-N-methylarginine. Phosphoserine is present on residues Ser14 and Ser22. Arg24 is subject to Asymmetric dimethylarginine; alternate. Arg24 carries the omega-N-methylarginine; alternate modification. Ser27 bears the Phosphoserine mark. At Arg32 the chain carries Omega-N-methylarginine. Residues Ser35 and Ser40 each carry the phosphoserine modification. 2 positions are modified to omega-N-methylarginine: Arg43 and Arg51. A Phosphoserine modification is found at Ser57. At Arg64 the chain carries Omega-N-methylarginine. A phosphoserine mark is found at Ser67 and Ser75. The coil 1A stretch occupies residues 83 to 118 (EKITMQNLNDRLASYLDKVRALEQANGELEVKIRDW). The 312-residue stretch at 83–394 (EKITMQNLND…SLLEGQEAHY (312 aa)) folds into the IF rod domain. Residues 119–136 (YQKQGPGPSRDYNHYFKT) are linker 1. A coil 1B region spans residues 137–228 (IEDLRDKILG…KNHEEEITAL (92 aa)). The linker 12 stretch occupies residues 229 to 251 (RSQVGGQVSVEVDSTPGVDLAKI). The interval 247 to 393 (DLAKILSEMR…RSLLEGQEAH (147 aa)) is necessary for interaction with PNN. The interval 252–390 (LSEMRSQYEI…ATYRSLLEGQ (139 aa)) is coil 2. Phosphothreonine is present on Thr326. Residues 391–403 (EAHYNNLPTPKAI) are rod-like helical tail. A Phosphotyrosine modification is found at Tyr394.

This sequence belongs to the intermediate filament family. Heterotetramer of two type I and two type II keratins. Interacts with PNN and the actin-binding domain of DMD.

Its function is as follows. Involved in the organization of myofibers. Together with KRT8, helps to link the contractile apparatus to dystrophin at the costameres of striated muscle. The protein is Keratin, type I cytoskeletal 19 (Krt19) of Mus musculus (Mouse).